A 312-amino-acid chain; its full sequence is RNA-binding protein Raly (312 aa).

S2 is modified (N-acetylserine). K4 participates in a covalent cross-link: Glycyl lysine isopeptide (Lys-Gly) (interchain with G-Cter in SUMO2). In terms of domain architecture, RRM spans 21-92 (SRVFIGNLNT…QTLDINMAGE (72 aa)). K44 carries the post-translational modification N6-acetyllysine. Residues K94 and K99 each participate in a glycyl lysine isopeptide (Lys-Gly) (interchain with G-Cter in SUMO2) cross-link. S135 carries the post-translational modification Phosphoserine. Residue K159 forms a Glycyl lysine isopeptide (Lys-Gly) (interchain with G-Cter in SUMO2) linkage. K165 is subject to N6-acetyllysine; alternate. Residue K165 forms a Glycyl lysine isopeptide (Lys-Gly) (interchain with G-Cter in SUMO2); alternate linkage. Glycyl lysine isopeptide (Lys-Gly) (interchain with G-Cter in SUMO2) cross-links involve residues K179 and K191. The stretch at 184 to 216 (SSELQTIKTELTQIKSNIDALLGRLEQIAEEQK) forms a coiled coil. The segment covering 214 to 226 (EQKANPDGKKKGD) has biased composition (basic and acidic residues). Positions 214–312 (EQKANPDGKK…DTDAEDGALQ (99 aa)) are disordered. Residues 228–253 (SSGGGGGSSGGGGSSNVGGGSSGGSG) show a composition bias toward gly residues. At T268 the chain carries Phosphothreonine. A Phosphoserine modification is found at S270. 2 positions are modified to phosphothreonine: T274 and T292. Basic and acidic residues predominate over residues 293–303 (HSEEELEHSQD). S294 and S301 each carry phosphoserine. A Phosphothreonine modification is found at T304.

It belongs to the RRM HNRPC family. RALY subfamily. Identified in the spliceosome C complex. Interacts (through its RNA-binding domain) with FUS (through its RNA-binding domain); both are components of the same RNPs. Widely expressed. Expressed in brain, testis, lung, spleen and kidney. Weakly expressed in liver.

It is found in the nucleus. Its function is as follows. RNA-binding protein that acts as a transcriptional cofactor for cholesterol biosynthetic genes in the liver. Binds the lipid-responsive non-coding RNA LeXis and is required for LeXis-mediated effect on cholesterogenesis. May be a heterogeneous nuclear ribonucleoprotein (hnRNP). The polypeptide is RNA-binding protein Raly (Raly) (Mus musculus (Mouse)).